A 613-amino-acid polypeptide reads, in one-letter code: Dihydroxy-acid dehydratase (613 aa).

D81 is a Mg(2+) binding site. [2Fe-2S] cluster is bound at residue C122. Positions 123 and 124 each coordinate Mg(2+). N6-carboxylysine is present on K124. C193 lines the [2Fe-2S] cluster pocket. E489 is a binding site for Mg(2+). S515 serves as the catalytic Proton acceptor.

This sequence belongs to the IlvD/Edd family. In terms of assembly, homodimer. [2Fe-2S] cluster serves as cofactor. The cofactor is Mg(2+).

It carries out the reaction (2R)-2,3-dihydroxy-3-methylbutanoate = 3-methyl-2-oxobutanoate + H2O. It catalyses the reaction (2R,3R)-2,3-dihydroxy-3-methylpentanoate = (S)-3-methyl-2-oxopentanoate + H2O. The protein operates within amino-acid biosynthesis; L-isoleucine biosynthesis; L-isoleucine from 2-oxobutanoate: step 3/4. Its pathway is amino-acid biosynthesis; L-valine biosynthesis; L-valine from pyruvate: step 3/4. Functions in the biosynthesis of branched-chain amino acids. Catalyzes the dehydration of (2R,3R)-2,3-dihydroxy-3-methylpentanoate (2,3-dihydroxy-3-methylvalerate) into 2-oxo-3-methylpentanoate (2-oxo-3-methylvalerate) and of (2R)-2,3-dihydroxy-3-methylbutanoate (2,3-dihydroxyisovalerate) into 2-oxo-3-methylbutanoate (2-oxoisovalerate), the penultimate precursor to L-isoleucine and L-valine, respectively. In Pseudomonas fluorescens (strain Pf0-1), this protein is Dihydroxy-acid dehydratase.